The primary structure comprises 516 residues: Nucleolar complex protein 4 homolog (516 aa).

The next 3 helical transmembrane spans lie at 297–317 (ACDL…ILIH), 347–367 (FFHL…LVAA), and 375–395 (LALT…CNLL).

Belongs to the CBF/MAK21 family.

The protein resides in the nucleus membrane. It localises to the nucleus. The protein localises to the nucleolus. The polypeptide is Nucleolar complex protein 4 homolog (NOC4L) (Homo sapiens (Human)).